A 286-amino-acid chain; its full sequence is Elongation factor Ts (286 aa).

The interval Thr-82 to Val-85 is involved in Mg(2+) ion dislocation from EF-Tu.

This sequence belongs to the EF-Ts family.

Its subcellular location is the cytoplasm. Functionally, associates with the EF-Tu.GDP complex and induces the exchange of GDP to GTP. It remains bound to the aminoacyl-tRNA.EF-Tu.GTP complex up to the GTP hydrolysis stage on the ribosome. This is Elongation factor Ts from Desulfovibrio desulfuricans (strain ATCC 27774 / DSM 6949 / MB).